The chain runs to 338 residues: Fructose-1,6-bisphosphatase class 1 (338 aa).

Mg(2+) is bound by residues glutamate 91, aspartate 113, leucine 115, and aspartate 116. Residues 116–119 (DGSS), asparagine 208, and lysine 274 contribute to the substrate site. Glutamate 280 lines the Mg(2+) pocket.

It belongs to the FBPase class 1 family. As to quaternary structure, homotetramer. Mg(2+) serves as cofactor.

The protein localises to the cytoplasm. It carries out the reaction beta-D-fructose 1,6-bisphosphate + H2O = beta-D-fructose 6-phosphate + phosphate. It functions in the pathway carbohydrate biosynthesis; gluconeogenesis. In Ralstonia pickettii (strain 12J), this protein is Fructose-1,6-bisphosphatase class 1.